The primary structure comprises 499 residues: Cobyric acid synthase (499 aa).

The GATase cobBQ-type domain occupies Arg266–Trp449. The active-site Nucleophile is the Cys344. The active site involves His441.

Belongs to the CobB/CobQ family. CobQ subfamily.

It functions in the pathway cofactor biosynthesis; adenosylcobalamin biosynthesis. In terms of biological role, catalyzes amidations at positions B, D, E, and G on adenosylcobyrinic A,C-diamide. NH(2) groups are provided by glutamine, and one molecule of ATP is hydrogenolyzed for each amidation. In Synechococcus sp. (strain JA-2-3B'a(2-13)) (Cyanobacteria bacterium Yellowstone B-Prime), this protein is Cobyric acid synthase.